The following is a 707-amino-acid chain: Leucine-rich repeat neuronal protein 3 (707 aa).

The signal sequence occupies residues 1 to 22 (MKDAPLQIHVLLGLAITALVQA). The 47-residue stretch at 23–69 (GDKKVDCPQLCTCEIRPWFTPRSIYMEASTVDCNDLGLLNFPARLPA) folds into the LRRNT domain. Residues 23 to 626 (GDKKVDCPQL…DGKENGKSHT (604 aa)) lie on the Extracellular side of the membrane. LRR repeat units lie at residues 70–91 (DTQILLLQTNNIARIEHSTDFP), 93–114 (NLTGLDLSQNNLSSVTNINVQK), 117–138 (QLLSVYLEENKLTELPEKCLYG), 141–162 (NLQELYVNHNLLSAISPGAFVG), 165–186 (NLLRLHLNSNRLQMINSKWFEA), 189–210 (NLEILMLGDNPILRIKDMNFQP), 213–234 (KLRSLVIAGINLTEVPDDALVG), 237–258 (NLESISFYDNRLNKVPQVALQK), 261–282 (NLKFLDLNKNPINRIRRGDFSN), 285–304 (HLKELGINNMPELVSIDSLA), 310–332 (DLRKIEATNNPRLSYIHPNAFFR), and 335–358 (KLESLMLNSNALSALYHGTIESLP). N-linked (GlcNAc...) asparagine glycans are attached at residues N93 and N103. N223 carries N-linked (GlcNAc...) asparagine glycosylation. An LRRCT domain is found at 368–421 (NPIRCDCVIRWINMNKTNIRFMEPDSLFCVDPPEFQGQNVRQVHFRDMMEICLP). Residue N382 is glycosylated (N-linked (GlcNAc...) asparagine). The Ig-like C2-type domain occupies 421–514 (PLIAPESFPS…DLKSIMIKVG (94 aa)). C444 and C496 form a disulfide bridge. N-linked (GlcNAc...) asparagine glycans are attached at residues N522, N579, and N608. In terms of domain architecture, Fibronectin type-III spans 523 to 614 (GSLNIKIRDI…QCVNVTTKSL (92 aa)). Residues 627–647 (VFVACVGGLLGIIGVMCLFGC) traverse the membrane as a helical segment. Topologically, residues 648-707 (VSQEGNCENEHSYTVNHCHKPTLAFSELYPPLINLWESSKEKPASLEVKATAIGVPTSMS) are cytoplasmic.

Its subcellular location is the membrane. In Rattus norvegicus (Rat), this protein is Leucine-rich repeat neuronal protein 3 (Lrrn3).